Consider the following 372-residue polypeptide: Alpha-1-antitrypsin homolog (372 aa).

The first 19 residues, 1-19 (MPATCLLHTMLTLPSPSTR), serve as a signal peptide directing secretion. N-linked (GlcNAc...) asparagine glycans are attached at residues Asn-214 and Asn-226. The interval 328 to 347 (AATTIEIMPMSLPDTVILNR) is RCL.

It belongs to the serpin family.

The protein resides in the secreted. The chain is Alpha-1-antitrypsin homolog from Cyprinus carpio (Common carp).